We begin with the raw amino-acid sequence, 91 residues long: Small ribosomal subunit protein uS15 (91 aa).

Belongs to the universal ribosomal protein uS15 family. Part of the 30S ribosomal subunit. Forms a bridge to the 50S subunit in the 70S ribosome, contacting the 23S rRNA.

Functionally, one of the primary rRNA binding proteins, it binds directly to 16S rRNA where it helps nucleate assembly of the platform of the 30S subunit by binding and bridging several RNA helices of the 16S rRNA. Its function is as follows. Forms an intersubunit bridge (bridge B4) with the 23S rRNA of the 50S subunit in the ribosome. In Amoebophilus asiaticus (strain 5a2), this protein is Small ribosomal subunit protein uS15.